The primary structure comprises 268 residues: Hemin import ATP-binding protein HmuV (268 aa).

One can recognise an ABC transporter domain in the interval 5–241; that stretch reads LKAEAASFAL…ELIADVFDVA (237 aa). 37–44 lines the ATP pocket; the sequence is GPNGAGKS.

It belongs to the ABC transporter superfamily. Heme (hemin) importer (TC 3.A.1.14.5) family. As to quaternary structure, the complex is composed of two ATP-binding proteins (HmuV), two transmembrane proteins (HmuU) and a solute-binding protein (HmuT).

The protein resides in the cell inner membrane. Its function is as follows. Part of the ABC transporter complex HmuTUV involved in hemin import. Responsible for energy coupling to the transport system. The protein is Hemin import ATP-binding protein HmuV of Rhodopseudomonas palustris (strain ATCC BAA-98 / CGA009).